The following is a 177-amino-acid chain: Large ribosomal subunit protein uL6 (177 aa).

It belongs to the universal ribosomal protein uL6 family. Part of the 50S ribosomal subunit.

In terms of biological role, this protein binds to the 23S rRNA, and is important in its secondary structure. It is located near the subunit interface in the base of the L7/L12 stalk, and near the tRNA binding site of the peptidyltransferase center. This chain is Large ribosomal subunit protein uL6, found in Haemophilus influenzae (strain 86-028NP).